The chain runs to 165 residues: Ribosome maturation factor RimM (165 aa).

The 72-residue stretch at 90–161 (EDEYFIVDLV…LITIRPSGEW (72 aa)) folds into the PRC barrel domain.

This sequence belongs to the RimM family. Binds ribosomal protein uS19.

The protein localises to the cytoplasm. Functionally, an accessory protein needed during the final step in the assembly of 30S ribosomal subunit, possibly for assembly of the head region. Essential for efficient processing of 16S rRNA. May be needed both before and after RbfA during the maturation of 16S rRNA. It has affinity for free ribosomal 30S subunits but not for 70S ribosomes. The sequence is that of Ribosome maturation factor RimM from Clostridium perfringens (strain ATCC 13124 / DSM 756 / JCM 1290 / NCIMB 6125 / NCTC 8237 / Type A).